The sequence spans 431 residues: Glucose-1-phosphate adenylyltransferase (431 aa).

K39 is a beta-D-fructose 1,6-bisphosphate binding site. R40, H46, and R52 together coordinate AMP. Residue Y114 coordinates alpha-D-glucose 1-phosphate. Position 130 (R130) interacts with AMP. Alpha-D-glucose 1-phosphate contacts are provided by residues G179, 194 to 195, and S212; that span reads EK. Residues E370 and R386 each coordinate AMP. Beta-D-fructose 1,6-bisphosphate contacts are provided by residues 419–423 and 429–431; these read REMLR and QER.

The protein belongs to the bacterial/plant glucose-1-phosphate adenylyltransferase family. In terms of assembly, homotetramer.

It carries out the reaction alpha-D-glucose 1-phosphate + ATP + H(+) = ADP-alpha-D-glucose + diphosphate. It participates in glycan biosynthesis; glycogen biosynthesis. Its activity is regulated as follows. Allosterically activated by fructose-1,6-bisphosphate (F16BP) and inhibited by AMP. Functionally, involved in the biosynthesis of ADP-glucose, a building block required for the elongation reactions to produce glycogen. Catalyzes the reaction between ATP and alpha-D-glucose 1-phosphate (G1P) to produce pyrophosphate and ADP-Glc. This Salmonella paratyphi A (strain ATCC 9150 / SARB42) protein is Glucose-1-phosphate adenylyltransferase.